The primary structure comprises 81 residues: Omega-conotoxin-like TxO4 (81 aa).

The N-terminal stretch at 1–22 is a signal peptide; it reads MKLTCVVIVAVLFLTAWTFVTA. A propeptide spanning residues 23-52 is cleaved from the precursor; it reads VPHSSNALENLYLKARHEMENPEASKLNTR. 3 disulfide bridges follow: Cys-55-Cys-72, Cys-62-Cys-76, and Cys-71-Cys-80. Pro-70 carries the 4-hydroxyproline; partial modification. Trp-75 is subject to 6'-bromotryptophan; partial.

It belongs to the conotoxin O1 superfamily. Post-translationally, txO4 is found with and without hydroxyproline and these two forms have a bromotryptophan. Truncated TxO4 is found with and without bromotryptophan, and these two forms have no hydroxyproline. Expressed by the venom duct.

It localises to the secreted. Functionally, omega-conotoxins act at presynaptic membranes, they bind and block voltage-gated calcium channels (Cav). In Conus textile (Cloth-of-gold cone), this protein is Omega-conotoxin-like TxO4.